A 315-amino-acid polypeptide reads, in one-letter code: Leukocidin-S subunit (315 aa).

The N-terminal stretch at 1–29 is a signal peptide; that stretch reads MLKNKILATTLSVSLLAPLANPLLENAKA.

This sequence belongs to the aerolysin family. As to quaternary structure, leukocidin consists of two protein components: F and S.

Functionally, leukocidin causes cytotoxic changes in polymorphonuclear leukocytes. This is Leukocidin-S subunit (lukS) from Staphylococcus aureus.